A 364-amino-acid chain; its full sequence is DNA polymerase IV (364 aa).

The UmuC domain maps to 14–198 (IIHIDMDAFF…LPIEKFHGVG (185 aa)). Mg(2+) is bound by residues Asp18 and Asp116. Glu117 is a catalytic residue.

The protein belongs to the DNA polymerase type-Y family. In terms of assembly, monomer. Mg(2+) is required as a cofactor.

The protein resides in the cytoplasm. It carries out the reaction DNA(n) + a 2'-deoxyribonucleoside 5'-triphosphate = DNA(n+1) + diphosphate. Poorly processive, error-prone DNA polymerase involved in untargeted mutagenesis. Copies undamaged DNA at stalled replication forks, which arise in vivo from mismatched or misaligned primer ends. These misaligned primers can be extended by PolIV. Exhibits no 3'-5' exonuclease (proofreading) activity. May be involved in translesional synthesis, in conjunction with the beta clamp from PolIII. The polypeptide is DNA polymerase IV (Streptococcus pyogenes serotype M2 (strain MGAS10270)).